A 120-amino-acid chain; its full sequence is Small ribosomal subunit protein uS13 (120 aa).

Residues 96–120 (PCRGQRTRTNARTRKGPRKAIAGKK) form a disordered region.

It belongs to the universal ribosomal protein uS13 family. As to quaternary structure, part of the 30S ribosomal subunit. Forms a loose heterodimer with protein S19. Forms two bridges to the 50S subunit in the 70S ribosome.

Located at the top of the head of the 30S subunit, it contacts several helices of the 16S rRNA. In the 70S ribosome it contacts the 23S rRNA (bridge B1a) and protein L5 of the 50S subunit (bridge B1b), connecting the 2 subunits; these bridges are implicated in subunit movement. Contacts the tRNAs in the A and P-sites. This chain is Small ribosomal subunit protein uS13, found in Chromobacterium violaceum (strain ATCC 12472 / DSM 30191 / JCM 1249 / CCUG 213 / NBRC 12614 / NCIMB 9131 / NCTC 9757 / MK).